The following is a 618-amino-acid chain: MHKTASQRLFPGPSYQNIKSIMEDSTILSDWTNSNKQKMKYDFSCELYRMSTYSTFPAGVPVSERSLARAGFYYTGVNDKVKCFCCGLMLDNWKLGDSPIQKHKQLYPSCSFIQNLVSASLGSTSKNTSPMRNSFAHSLSPTLEHSSLFSGSYSSLSPNPLNSRAVEDISSSRTNPYSYAMSTEEARFLTYHMWPLTFLSPSELARAGFYYIGPGDRVACFACGGKLSNWEPKDDAMSEHRRHFPNCPFLENSLETLRFSISNLSMQTHAARMRTFMYWPSSVPVQPEQLASAGFYYVGRNDDVKCFCCDGGLRCWESGDDPWVEHAKWFPRCEFLIRMKGQEFVDEIQGRYPHLLEQLLSTSDTTGEENADPPIIHFGPGESSSEDAVMMNTPVVKSALEMGFNRDLVKQTVQSKILTTGENYKTVNDIVSALLNAEDEKREEEKEKQAEEMASDDLSLIRKNRMALFQQLTCVLPILDNLLKANVINKQEHDIIKQKTQIPLQARELIDTILVKGNAAANIFKNCLKEIDSTLYKNLFVDKNMKYIPTEDVSGLSLEEQLRRLQEERTCKVCMDKEVSVVFIPCGHLVVCQECAPSLRKCPICRGIIKGTVRTFLS.

3 BIR repeats span residues Glu46–Ile113, Glu184–Leu250, and His269–Leu336. Zn(2+) is bound by residues Cys306, Cys309, His326, and Cys333. Residues Met453–Lys543 form the CARD domain. The RING-type zinc-finger motif lies at Cys571 to Arg606.

This sequence belongs to the IAP family. Interacts with DIABLO/SMAC and with PRSS25; these interactions inhibit apoptotic suppressor activity. Interacts with CASP9. Interacts (via BIR domains) with TRAF2; the interaction is required for IKBKE ubiquitination. Interacts with E2F1, RIPK1, RIPK2, RIPK3, RIPK4, BIRC5/survivin and USP19. HSP90AB1. Interacts with UBXN1. Interacts with GSK3B. Interacts with several death receptors, inclusing FAS, TNFRSF10A and TNFRSF10B. Recruited to TNFRSF10B in the absence of receptor stimulation. When TNFRSF10B is stimulated, further recruited to the receptor and cleaved by caspases. Proteolytic fragments remain associated with TNFRSF10B. Post-translationally, auto-ubiquitinated and degraded by the proteasome in apoptotic cells. In terms of processing, upon stimulation of death receptors, including TNFRSF10B, recruited to receptors and cleaved by caspases. Proteolytic fragments remain associated with the receptors. This cleavage presumably inactivates the protein. Present in many fetal and adult tissues. Mainly expressed in adult skeletal muscle, thymus, testis, ovary, and pancreas, low or absent in brain and peripheral blood leukocytes.

The protein resides in the cytoplasm. Its subcellular location is the nucleus. It catalyses the reaction S-ubiquitinyl-[E2 ubiquitin-conjugating enzyme]-L-cysteine + [acceptor protein]-L-lysine = [E2 ubiquitin-conjugating enzyme]-L-cysteine + N(6)-ubiquitinyl-[acceptor protein]-L-lysine.. The CARD domain inhibits the activation of E3 ubiquitin ligase activity by preventing RING domain dimerization and E2 ubiquitin donor binding and activation. The CARD domain-mediated autoinhibition of the E3 ubiquitin-protein ligase activity suppresses cell proliferation and migration. USP19 regulates the stability of BIRC2/c-IAP1 by preventing its ubiquitination. Multi-functional protein which regulates not only caspases and apoptosis, but also modulates inflammatory signaling and immunity, mitogenic kinase signaling, and cell proliferation, as well as cell invasion and metastasis. Acts as an E3 ubiquitin-protein ligase regulating NF-kappa-B signaling and regulates both canonical and non-canonical NF-kappa-B signaling by acting in opposite directions: acts as a positive regulator of the canonical pathway and suppresses constitutive activation of non-canonical NF-kappa-B signaling. The target proteins for its E3 ubiquitin-protein ligase activity include: RIPK1, RIPK2, RIPK3, RIPK4, CASP3, CASP7, CASP8, TRAF2, DIABLO/SMAC, MAP3K14/NIK, MAP3K5/ASK1, IKBKG/NEMO, IKBKE and MXD1/MAD1. Can also function as an E3 ubiquitin-protein ligase of the NEDD8 conjugation pathway, targeting effector caspases for neddylation and inactivation. Acts as an important regulator of innate immune signaling via regulation of Toll-like receptors (TLRs), Nodlike receptors (NLRs) and RIG-I like receptors (RLRs), collectively referred to as pattern recognition receptors (PRRs). Protects cells from spontaneous formation of the ripoptosome, a large multi-protein complex that has the capability to kill cancer cells in a caspase-dependent and caspase-independent manner. Suppresses ripoptosome formation by ubiquitinating RIPK1 and CASP8. Can stimulate the transcriptional activity of E2F1. Plays a role in the modulation of the cell cycle. In Homo sapiens (Human), this protein is Baculoviral IAP repeat-containing protein 2 (BIRC2).